A 151-amino-acid chain; its full sequence is UPF0178 protein YaiI (151 aa).

The protein belongs to the UPF0178 family.

The polypeptide is UPF0178 protein YaiI (Salmonella choleraesuis (strain SC-B67)).